The primary structure comprises 201 residues: MPLSIIHFPHPTLRHVSRPIVRVDAKLKSMADEMLDLMYEFDGVGLAANQVDLPIRMFVANPTGKRDEGESWVILNPEIDRPKGNDTAQEGCLSVPGLYGQVKRPKTVRLRGFDLQGNEINQVLDGFMARVVQHEVDHLDGIMFFDRIGEEGLRDLEGHLEEFKTDYESKQGTGSIADEATLAQQRAEWEAMYTGGTTSNG.

The Fe cation site is built by cysteine 92 and histidine 134. Glutamate 135 is an active-site residue. Residue histidine 138 participates in Fe cation binding.

This sequence belongs to the polypeptide deformylase family. Fe(2+) serves as cofactor.

The enzyme catalyses N-terminal N-formyl-L-methionyl-[peptide] + H2O = N-terminal L-methionyl-[peptide] + formate. In terms of biological role, removes the formyl group from the N-terminal Met of newly synthesized proteins. Requires at least a dipeptide for an efficient rate of reaction. N-terminal L-methionine is a prerequisite for activity but the enzyme has broad specificity at other positions. The polypeptide is Peptide deformylase (Rhodopirellula baltica (strain DSM 10527 / NCIMB 13988 / SH1)).